Here is a 437-residue protein sequence, read N- to C-terminus: Enolase superfamily member DDB_G0284701 (437 aa).

Lysine 217 (proton acceptor) is an active-site residue. Mn(2+) is bound by residues aspartate 251, glutamate 279, and aspartate 321. The active-site Proton donor is the aspartate 395.

This sequence belongs to the mandelate racemase/muconate lactonizing enzyme family.

In Dictyostelium discoideum (Social amoeba), this protein is Enolase superfamily member DDB_G0284701.